A 183-amino-acid polypeptide reads, in one-letter code: ATP-dependent protease subunit HslV (183 aa).

T2 is a catalytic residue. 3 residues coordinate Na(+): G157, C160, and T163.

This sequence belongs to the peptidase T1B family. HslV subfamily. As to quaternary structure, a double ring-shaped homohexamer of HslV is capped on each side by a ring-shaped HslU homohexamer. The assembly of the HslU/HslV complex is dependent on binding of ATP.

Its subcellular location is the cytoplasm. It carries out the reaction ATP-dependent cleavage of peptide bonds with broad specificity.. Its activity is regulated as follows. Allosterically activated by HslU binding. Protease subunit of a proteasome-like degradation complex believed to be a general protein degrading machinery. This is ATP-dependent protease subunit HslV from Vibrio campbellii (strain ATCC BAA-1116).